A 113-amino-acid chain; its full sequence is Protein translation factor SUI1 homolog (113 aa).

Belongs to the SUI1 family.

Its function is as follows. Probably involved in translation. In Spuriopimpinella brachycarpa (Chamnamul), this protein is Protein translation factor SUI1 homolog.